Here is a 160-residue protein sequence, read N- to C-terminus: NADH-quinone oxidoreductase subunit I (160 aa).

4Fe-4S ferredoxin-type domains are found at residues 51 to 80 (RRYKNGEERCIACKLCEVVCPAQAITIEAA) and 91 to 120 (TKYDIDMTKCIYCGFCQEACPVDAIVEGPN). Positions 60, 63, 66, 70, 100, 103, 106, and 110 each coordinate [4Fe-4S] cluster.

Belongs to the complex I 23 kDa subunit family. In terms of assembly, NDH-1 is composed of 14 different subunits. Subunits NuoA, H, J, K, L, M, N constitute the membrane sector of the complex. It depends on [4Fe-4S] cluster as a cofactor.

The protein localises to the cell inner membrane. The enzyme catalyses a quinone + NADH + 5 H(+)(in) = a quinol + NAD(+) + 4 H(+)(out). NDH-1 shuttles electrons from NADH, via FMN and iron-sulfur (Fe-S) centers, to quinones in the respiratory chain. The immediate electron acceptor for the enzyme in this species is believed to be ubiquinone. Couples the redox reaction to proton translocation (for every two electrons transferred, four hydrogen ions are translocated across the cytoplasmic membrane), and thus conserves the redox energy in a proton gradient. The chain is NADH-quinone oxidoreductase subunit I from Neorickettsia sennetsu (strain ATCC VR-367 / Miyayama) (Ehrlichia sennetsu).